The primary structure comprises 113 residues: U11-theraphotoxin-Hhn1h (113 aa).

A signal peptide spans 1 to 21 (MNTVRVTFLLVFVLVVSLGQA). A propeptide spanning residues 22-74 (DKDENRMEMQEKTEQGKSYLDFAENLLLQKLEELEAKLLEEDSEESRNSRQKR) is cleaved from the precursor. Residues 61-83 (EEDSEESRNSRQKRRIGEGVPCD) are disordered. 2 disulfides stabilise this stretch: C82/C95 and C89/C110.

Belongs to the neurotoxin 14 (magi-1) family. 01 (HNTX-16) subfamily. As to expression, expressed by the venom gland.

It is found in the secreted. Functionally, probable ion channel inhibitor. The sequence is that of U11-theraphotoxin-Hhn1h from Cyriopagopus hainanus (Chinese bird spider).